Reading from the N-terminus, the 265-residue chain is Octanoyltransferase (265 aa).

In terms of domain architecture, BPL/LPL catalytic spans 35-254; that stretch reads DEVPDTVLLL…HLRDVLENAE (220 aa). Substrate-binding positions include 73–80, 184–186, and 197–199; these read RGGKITWH, AIG, and GFA. The active-site Acyl-thioester intermediate is cysteine 215.

The protein belongs to the LipB family.

It localises to the cytoplasm. It catalyses the reaction octanoyl-[ACP] + L-lysyl-[protein] = N(6)-octanoyl-L-lysyl-[protein] + holo-[ACP] + H(+). It participates in protein modification; protein lipoylation via endogenous pathway; protein N(6)-(lipoyl)lysine from octanoyl-[acyl-carrier-protein]: step 1/2. Its function is as follows. Catalyzes the transfer of endogenously produced octanoic acid from octanoyl-acyl-carrier-protein onto the lipoyl domains of lipoate-dependent enzymes. Lipoyl-ACP can also act as a substrate although octanoyl-ACP is likely to be the physiological substrate. In Streptomyces coelicolor (strain ATCC BAA-471 / A3(2) / M145), this protein is Octanoyltransferase.